The chain runs to 205 residues: GTP cyclohydrolase 1 (205 aa).

Residues cysteine 94, histidine 97, and cysteine 165 each contribute to the Zn(2+) site.

This sequence belongs to the GTP cyclohydrolase I family. Homomer.

The enzyme catalyses GTP + H2O = 7,8-dihydroneopterin 3'-triphosphate + formate + H(+). Its pathway is cofactor biosynthesis; 7,8-dihydroneopterin triphosphate biosynthesis; 7,8-dihydroneopterin triphosphate from GTP: step 1/1. This chain is GTP cyclohydrolase 1, found in Sinorhizobium fredii (strain NBRC 101917 / NGR234).